The sequence spans 133 residues: Small ribosomal subunit protein uS8 (133 aa).

This sequence belongs to the universal ribosomal protein uS8 family. Part of the 30S ribosomal subunit.

Functionally, one of the primary rRNA binding proteins, it binds directly to 16S rRNA central domain where it helps coordinate assembly of the platform of the 30S subunit. The protein is Small ribosomal subunit protein uS8 of Aeropyrum pernix (strain ATCC 700893 / DSM 11879 / JCM 9820 / NBRC 100138 / K1).